The sequence spans 179 residues: MSRVGKMPIAIPAGVTVTVTPENVVTVKGPKGELVKAMHKDINIAVEDAQVVVTRPSDVKEHRALHGLTRALLNNMVVGVSQGFSKTLELNGVGYRAQLQGKKLVMNLGYSHPVEVEAVDGVDFKLDGTTKVIVEGIDKEKVGAVAANIRSWRKPEPYKGKGIKYSDEVIRRKEGKTGK.

This sequence belongs to the universal ribosomal protein uL6 family. As to quaternary structure, part of the 50S ribosomal subunit.

Functionally, this protein binds to the 23S rRNA, and is important in its secondary structure. It is located near the subunit interface in the base of the L7/L12 stalk, and near the tRNA binding site of the peptidyltransferase center. This chain is Large ribosomal subunit protein uL6, found in Clostridium perfringens (strain ATCC 13124 / DSM 756 / JCM 1290 / NCIMB 6125 / NCTC 8237 / Type A).